Here is a 94-residue protein sequence, read N- to C-terminus: Integration host factor subunit beta (94 aa).

This sequence belongs to the bacterial histone-like protein family. In terms of assembly, heterodimer of an alpha and a beta chain.

Functionally, this protein is one of the two subunits of integration host factor, a specific DNA-binding protein that functions in genetic recombination as well as in transcriptional and translational control. This is Integration host factor subunit beta (ihfB) from Pasteurella multocida (strain Pm70).